We begin with the raw amino-acid sequence, 94 residues long: Co-chaperonin GroES (94 aa).

The protein belongs to the GroES chaperonin family. As to quaternary structure, heptamer of 7 subunits arranged in a ring. Interacts with the chaperonin GroEL.

It is found in the cytoplasm. In terms of biological role, together with the chaperonin GroEL, plays an essential role in assisting protein folding. The GroEL-GroES system forms a nano-cage that allows encapsulation of the non-native substrate proteins and provides a physical environment optimized to promote and accelerate protein folding. GroES binds to the apical surface of the GroEL ring, thereby capping the opening of the GroEL channel. This chain is Co-chaperonin GroES, found in Geobacillus thermodenitrificans (strain NG80-2).